We begin with the raw amino-acid sequence, 518 residues long: Sensor protein kinase HptS (518 aa).

A run of 2 helical transmembrane segments spans residues 20–40 and 222–242; these read IFPV…IYIW and GITL…FGFI. The 217-residue stretch at 297 to 513 folds into the Histidine kinase domain; it reads EQLIHSIEHT…LICYKIPLSR (217 aa). The residue at position 325 (H325) is a Phosphohistidine; by autocatalysis.

In terms of processing, autophosphorylated.

The protein localises to the cell membrane. The enzyme catalyses ATP + protein L-histidine = ADP + protein N-phospho-L-histidine.. Member of the two-component regulatory system HptS/HptR that regulates genes involved in hexose phosphate transport system in response to changes in extracellular phosphate sources. May act as a sensor protein kinase which is autophosphorylated at a histidine residue and transfers its phosphate group to the conserved aspartic acid residue in the regulatory domain of HptS. In turn, HptS antagonizes CcpA-dependent transcription of a subset of CcpA-regulated genes involved in antibiotic susceptibility. The sequence is that of Sensor protein kinase HptS (hptS) from Staphylococcus aureus (strain MRSA252).